Here is a 256-residue protein sequence, read N- to C-terminus: Putative cysteine-rich repeat secretory protein 21 (256 aa).

The first 30 residues, 1-30, serve as a signal peptide directing secretion; the sequence is MYSSVSKRLVSVHILVVVALQLLFIPNVLS. 2 Gnk2-homologous domains span residues 37 to 139 and 145 to 253; these read YLHH…SIDT and YQNN…LYPF.

The protein belongs to the cysteine-rich repeat secretory protein family.

Its subcellular location is the secreted. This is Putative cysteine-rich repeat secretory protein 21 (CRRSP21) from Arabidopsis thaliana (Mouse-ear cress).